The sequence spans 353 residues: uncharacterized protein (353 aa).

The N-terminal stretch at 1–28 (MHLTIMRRFAVLLLLAIFLGGCSGSNGA) is a signal peptide.

This is an uncharacterized protein from Archaeoglobus fulgidus (strain ATCC 49558 / DSM 4304 / JCM 9628 / NBRC 100126 / VC-16).